We begin with the raw amino-acid sequence, 582 residues long: TBCC domain-containing protein 1 (582 aa).

The span at 140–153 (EWPSPRSRSPSSSS) shows a compositional bias: low complexity. Positions 140–159 (EWPSPRSRSPSSSSSERDAK) are disordered. In terms of domain architecture, C-CAP/cofactor C-like spans 305 to 451 (PPGSRLVLMS…LWNQPLLFGV (147 aa)). A compositionally biased stretch (low complexity) spans 547–558 (SLLPPTITPSSS). The tract at residues 547 to 582 (SLLPPTITPSSSAEHWSSNQNTLKEQTHEQPTGTVC) is disordered. A compositionally biased stretch (polar residues) spans 559-582 (AEHWSSNQNTLKEQTHEQPTGTVC).

This sequence belongs to the TBCC family.

The protein resides in the cytoplasm. It localises to the cytoskeleton. It is found in the microtubule organizing center. Its subcellular location is the centrosome. The protein localises to the spindle pole. May play a role in the regulation of centrosome and Golgi apparatus positioning. This is TBCC domain-containing protein 1 (tbccd1) from Danio rerio (Zebrafish).